Consider the following 113-residue polypeptide: MHILDKVDAAQLRDDIPEFRAGDTVDVHLKVIEGSKSRVQVFRGVVIKRQGSGIRETFTVRKVSFGIGVERTIPVHSPNIDKLEVLSRGKVRRAKLYYLRDRHGKAAKIKEKR.

Belongs to the bacterial ribosomal protein bL19 family.

In terms of biological role, this protein is located at the 30S-50S ribosomal subunit interface and may play a role in the structure and function of the aminoacyl-tRNA binding site. This Corynebacterium urealyticum (strain ATCC 43042 / DSM 7109) protein is Large ribosomal subunit protein bL19.